We begin with the raw amino-acid sequence, 228 residues long: Calcyclin-binding protein (228 aa).

M1 is subject to N-acetylmethionine. A2 carries the post-translational modification N-acetylalanine. The segment at A2–W80 is interaction with SIAH1. S3 carries the post-translational modification Phosphoserine. N6-acetyllysine occurs at positions 8 and 19. S34 carries the phosphoserine modification. In terms of domain architecture, CS spans V73–T167. The interval V73–F228 is interaction with SKP1. K85 and K118 each carry N6-acetyllysine. Positions C154–F228 are interaction with S100A6. The SGS domain maps to Q168–F228.

In terms of assembly, homodimer. Interacts with proteins of the S100 family S100A1, S100A6, S100B, S100P and S100A12 in a calcium-dependent manner. Component of some large E3 complex at least composed of UBE2D1, SIAH1, CACYBP/SIP, SKP1, APC and TBL1X. Interacts directly with SIAH1, SIAH2 and SKP1. Post-translationally, phosphorylated on serine residues. Phosphorylated upon induction by RA or at high calcium concentrations.

It is found in the nucleus. Its subcellular location is the cytoplasm. In terms of biological role, may be involved in calcium-dependent ubiquitination and subsequent proteasomal degradation of target proteins. Probably serves as a molecular bridge in ubiquitin E3 complexes. Participates in the ubiquitin-mediated degradation of beta-catenin (CTNNB1). The polypeptide is Calcyclin-binding protein (CACYBP) (Homo sapiens (Human)).